The primary structure comprises 161 residues: EP300-interacting inhibitor of differentiation 2B (161 aa).

2 disordered regions span residues 1 to 26 (MAEPTGLLEMSELPGDSSVPQVGTAS) and 54 to 77 (ARSMARMPGPVPGPIPSSVPGLAS).

In terms of assembly, homodimer and heterodimer with EID2. Interacts with HDAC1 and HDAC2.

The protein localises to the nucleus. Its function is as follows. Acts as a repressor of MYOD-dependent transcription, glucocorticoid receptor-dependent transcription, and muscle differentiation. In Homo sapiens (Human), this protein is EP300-interacting inhibitor of differentiation 2B.